Here is a 244-residue protein sequence, read N- to C-terminus: 5-oxoprolinase subunit A (244 aa).

This sequence belongs to the LamB/PxpA family. In terms of assembly, forms a complex composed of PxpA, PxpB and PxpC.

It catalyses the reaction 5-oxo-L-proline + ATP + 2 H2O = L-glutamate + ADP + phosphate + H(+). Functionally, catalyzes the cleavage of 5-oxoproline to form L-glutamate coupled to the hydrolysis of ATP to ADP and inorganic phosphate. The polypeptide is 5-oxoprolinase subunit A (Salmonella choleraesuis (strain SC-B67)).